The sequence spans 962 residues: Translation initiation factor IF-2 (962 aa).

Residues 101–366 form a disordered region; it reads AAQTQAAPVR…KKGKKLKLEP (266 aa). Positions 117–141 are enriched in basic and acidic residues; the sequence is DAAKARAEAATRAEARAKAEAEAAK. The span at 145-157 shows a compositional bias: low complexity; sequence AKAGNKAKPAAQK. The span at 173–216 shows a compositional bias: basic and acidic residues; sequence KPAEESKAEKAQADKMPSKKPAEPKEKAAKPKHERNGKGKDAKK. Over residues 219–234 the composition is skewed to low complexity; it reads KPAAPAVPQPVVSAEE. The span at 235-269 shows a compositional bias: basic and acidic residues; it reads QAQRDEEARRAAALRAHQEALLKEKQERQARREAM. The span at 270 to 283 shows a compositional bias: low complexity; the sequence is KQQAEQQAKAAQEA. Positions 338–354 are enriched in basic and acidic residues; it reads GGRDRNNARNGDDERVR. One can recognise a tr-type G domain in the interval 462–631; that stretch reads PRPPVVTVMG…LLEAEVLELT (170 aa). The segment at 471 to 478 is G1; sequence GHVDHGKT. 471 to 478 is a binding site for GTP; it reads GHVDHGKT. The interval 496 to 500 is G2; that stretch reads GITQH. The interval 517 to 520 is G3; the sequence is DTPG. GTP contacts are provided by residues 517 to 521 and 571 to 574; these read DTPGH and NKID. The interval 571-574 is G4; sequence NKID. The G5 stretch occupies residues 607–609; it reads SAK.

It belongs to the TRAFAC class translation factor GTPase superfamily. Classic translation factor GTPase family. IF-2 subfamily.

The protein resides in the cytoplasm. Its function is as follows. One of the essential components for the initiation of protein synthesis. Protects formylmethionyl-tRNA from spontaneous hydrolysis and promotes its binding to the 30S ribosomal subunits. Also involved in the hydrolysis of GTP during the formation of the 70S ribosomal complex. In Neisseria meningitidis serogroup A / serotype 4A (strain DSM 15465 / Z2491), this protein is Translation initiation factor IF-2.